The chain runs to 144 residues: Large ribosomal subunit protein uL13 (144 aa).

It belongs to the universal ribosomal protein uL13 family. In terms of assembly, part of the 50S ribosomal subunit.

Functionally, this protein is one of the early assembly proteins of the 50S ribosomal subunit, although it is not seen to bind rRNA by itself. It is important during the early stages of 50S assembly. This is Large ribosomal subunit protein uL13 from Ruminiclostridium cellulolyticum (strain ATCC 35319 / DSM 5812 / JCM 6584 / H10) (Clostridium cellulolyticum).